The chain runs to 32 residues: MSDIN-like toxin proprotein 3 (32 aa).

A propeptide spanning residues 1–10 is cleaved from the precursor; sequence MSDINATRLP. The cyclopeptide (Ser-Pro) cross-link spans 11 to 17; that stretch reads SFFFPIP. A propeptide spanning residues 18–32 is cleaved from the precursor; that stretch reads CISDDIEMVLTRGER.

The protein belongs to the MSDIN fungal toxin family. Processed by the macrocyclase-peptidase enzyme POPB to yield a toxic cyclic heptapeptide. POPB first removes 10 residues from the N-terminus. Conformational trapping of the remaining peptide forces the enzyme to release this intermediate rather than proceed to macrocyclization. The enzyme rebinds the remaining peptide in a different conformation and catalyzes macrocyclization of the N-terminal 8 residues.

Probable toxin that belongs to the MSDIN-like toxin family responsible for a large number of food poisoning cases and deaths. In Amanita phalloides (Death cap), this protein is MSDIN-like toxin proprotein 3.